We begin with the raw amino-acid sequence, 214 residues long: Refilin-B (214 aa).

A disordered region spans residues 1–56; sequence MVGRLSLQDVPELVDAKKKGDGVLDSPDSGLPPSPSPSHWGLAAGGGGGERAAAPG. Phosphoserine is present on residues S6 and S26.

The protein belongs to the Refilin family. In terms of assembly, interacts with FLNA and FLNB.

It is found in the cytoplasm. Its subcellular location is the cytoskeleton. Its function is as follows. Involved in the regulation of the perinuclear actin network and nuclear shape through interaction with filamins. Plays an essential role in the formation of cartilaginous skeletal elements. The protein is Refilin-B of Homo sapiens (Human).